The following is a 502-amino-acid chain: Probable glycine dehydrogenase (decarboxylating) subunit 2 (502 aa).

K273 carries the post-translational modification N6-(pyridoxal phosphate)lysine.

The protein belongs to the GcvP family. C-terminal subunit subfamily. As to quaternary structure, the glycine cleavage system is composed of four proteins: P, T, L and H. In this organism, the P 'protein' is a heterodimer of two subunits. Requires pyridoxal 5'-phosphate as cofactor.

The catalysed reaction is N(6)-[(R)-lipoyl]-L-lysyl-[glycine-cleavage complex H protein] + glycine + H(+) = N(6)-[(R)-S(8)-aminomethyldihydrolipoyl]-L-lysyl-[glycine-cleavage complex H protein] + CO2. Its function is as follows. The glycine cleavage system catalyzes the degradation of glycine. The P protein binds the alpha-amino group of glycine through its pyridoxal phosphate cofactor; CO(2) is released and the remaining methylamine moiety is then transferred to the lipoamide cofactor of the H protein. The sequence is that of Probable glycine dehydrogenase (decarboxylating) subunit 2 from Pyrococcus horikoshii (strain ATCC 700860 / DSM 12428 / JCM 9974 / NBRC 100139 / OT-3).